The following is a 691-amino-acid chain: Protein 4.2 (691 aa).

Glycine 2 is lipidated: N-myristoyl glycine. Residues 31 to 39 (LFVRRGQPF) form a band 3 binding region. Serine 248 carries the phosphoserine; by PKA modification.

The protein belongs to the transglutaminase superfamily. Transglutaminase family. Component of the ankyrin-1 complex in the erythrocyte, composed of ANK1, RHCE, RHAG, SLC4A1, EPB42, GYPA, GYPB and AQP1. Interacts with SLC4A1 (via the cytoplasmic domain); this interaction is mediated by the SLC4A1 Band 3-I dimer. Interacts with ANK1 (via ANK 1-13 repeats). Interacts with AQP1 (via the C-terminal). Post-translationally, both cAMP-dependent kinase (CAPK) and another kinase present in the red-blood cells seem to be able to phosphorylate EPB42.

The protein localises to the cell membrane. It is found in the cytoplasm. The protein resides in the cytoskeleton. In terms of biological role, component of the ankyrin-1 complex, a multiprotein complex involved in the stability and shape of the erythrocyte membrane. This chain is Protein 4.2, found in Homo sapiens (Human).